The primary structure comprises 363 residues: MEPTYEEYLANHGTIVKPYYWLSFSLDCSNCPYHIRTGEEARVSLTEFCQIFGFPYGTTYPQTKHLTFYELKTSSGSLVQKGHASSCTGNYIHPESMLFEMNGYLDSAIYNNDSIRHIILYCNNSPCNEANHCCISKVYNFLITYPGITLSIYFSQLYHTEMDFPASAWNREALRSLASLWPRVVLSPISGGIWHSVLHSFVSGVSGSHVFQPILTGRALTDRYNAYEINAITGVKPFFTDVLLHTKRNPNTKAQMALESYPLNNAFPGQSFQMTSGIPPDLRAPVVFVLLPLRDLPPMHMGQDPNKPRNIIRHLNMPQMSFQETKDLERLPTRRSVETVEITERFASSKQAEEKTKKKKGKK.

The region spanning proline 61–leucine 177 is the CMP/dCMP-type deaminase domain. Residue histidine 93 coordinates Zn(2+). Residue glutamate 95 is the Proton donor of the active site. The Zn(2+) site is built by cysteine 127 and cysteine 134.

The protein belongs to the cytidine and deoxycytidylate deaminase family. Zn(2+) serves as cofactor.

Its function is as follows. Putative C to U editing enzyme whose physiological substrate is not yet known. The sequence is that of Putative C-&gt;U-editing enzyme APOBEC-4 (APOBEC4) from Macaca fascicularis (Crab-eating macaque).